The sequence spans 88 residues: Small ribosomal subunit protein bS18 (88 aa).

Over residues 1–11 (MTTANTTAKDN) the composition is skewed to low complexity. A disordered region spans residues 1 to 21 (MTTANTTAKDNAATKKRGRKA).

It belongs to the bacterial ribosomal protein bS18 family. In terms of assembly, part of the 30S ribosomal subunit. Forms a tight heterodimer with protein bS6.

Its function is as follows. Binds as a heterodimer with protein bS6 to the central domain of the 16S rRNA, where it helps stabilize the platform of the 30S subunit. In Thermoanaerobacter pseudethanolicus (strain ATCC 33223 / 39E) (Clostridium thermohydrosulfuricum), this protein is Small ribosomal subunit protein bS18.